We begin with the raw amino-acid sequence, 162 residues long: MSVVNRRIAVYPGTFDPITNGHIDLVSRAAPLFESIVVGVAQSPSKGPSLPLQQRVALAREALCQHENVQVIGFDTLLAHFVRHVGAGVLLRGLRAVSDFEYEFQMASMNRHLIPEVETLFLTPAEQHSFISSSLVREIARLGGDVSGFAPAAVVAALRQNL.

Thr14 contacts substrate. ATP-binding positions include 14-15 and His22; that span reads TF. 3 residues coordinate substrate: Lys46, Leu78, and Arg92. Residues 93 to 95, Glu103, and 128 to 134 each bind ATP; these read GLR and HSFISSS.

The protein belongs to the bacterial CoaD family. As to quaternary structure, homohexamer. It depends on Mg(2+) as a cofactor.

It localises to the cytoplasm. The catalysed reaction is (R)-4'-phosphopantetheine + ATP + H(+) = 3'-dephospho-CoA + diphosphate. Its pathway is cofactor biosynthesis; coenzyme A biosynthesis; CoA from (R)-pantothenate: step 4/5. Its function is as follows. Reversibly transfers an adenylyl group from ATP to 4'-phosphopantetheine, yielding dephospho-CoA (dPCoA) and pyrophosphate. In Xylella fastidiosa (strain 9a5c), this protein is Phosphopantetheine adenylyltransferase.